Here is a 158-residue protein sequence, read N- to C-terminus: C-type lectin TsL (158 aa).

Positions 1–23 (MGRFIFVSFGLLVVFLSLSGAKG) are cleaved as a signal peptide. One can recognise a C-type lectin domain in the interval 24–158 (SCCTNDSLPM…KNSFLCQCKF (135 aa)). Cystine bridges form between C26/C37, C54/C154, C61/C156, and C129/C146. N28 carries an N-linked (GlcNAc...) (high mannose) asparagine glycan. Q119, D121, E127, N142, and D143 together coordinate Ca(2+). The Galactose-binding motif lies at 119-121 (QPD).

This sequence belongs to the true venom lectin family. Homodimer; disulfide-linked. Expressed by the venom gland.

The protein resides in the secreted. In terms of biological role, galactose-binding protein which recognizes specific carbohydrate structures and agglutinates a variety of animal cells by binding to cell-surface glycoproteins and glycolipids. May be a calcium-dependent lectin. The chain is C-type lectin TsL from Trimeresurus stejnegeri (Chinese green tree viper).